Consider the following 800-residue polypeptide: Putative antiporter subunit mnhA2 (800 aa).

Transmembrane regions (helical) follow at residues 1 to 21 (MSLV…LLTS), 33 to 53 (IALT…PSVI), 78 to 98 (GLSL…FFYA), 118 to 138 (LFMF…MYVF), 167 to 187 (FMIT…LYIM), 207 to 227 (ALFI…SAQF), 241 to 261 (TPVS…FLLL), 273 to 293 (YIYI…ITAL), 300 to 320 (GILA…VGIG), 331 to 351 (IASI…NHAI), 387 to 407 (LVMM…GFLS), 424 to 444 (FSLI…IFTF), 472 to 492 (PWLF…IFFV), 527 to 547 (GFNI…VLAI), 595 to 615 (IIMT…RIGL), 627 to 647 (GPLE…LIFI), 651 to 671 (LTMV…FIAM), 676 to 696 (LALT…VSFS), 712 to 732 (IIKI…IFIA), and 768 to 788 (LDTL…YTLL).

This sequence belongs to the CPA3 antiporters (TC 2.A.63) subunit A family. As to quaternary structure, may form a heterooligomeric complex that consists of seven subunits: mnhA2, mnhB2, mnhC2, mnhD2, mnhE2, mnhF2 and mnhG2.

The protein resides in the cell membrane. This chain is Putative antiporter subunit mnhA2 (mnhA2), found in Staphylococcus aureus (strain MRSA252).